A 246-amino-acid chain; its full sequence is Isoprenyl transferase (246 aa).

The active site involves Asp-18. Residue Asp-18 coordinates Mg(2+). Substrate contacts are provided by residues 19–22 (GNGR), Trp-23, Arg-31, His-35, and 63–65 (SAE). Catalysis depends on Asn-66, which acts as the Proton acceptor. Substrate is bound by residues Trp-67, Arg-69, Arg-186, and 192 to 194 (RIS). Glu-205 lines the Mg(2+) pocket.

The protein belongs to the UPP synthase family. In terms of assembly, homodimer. Mg(2+) serves as cofactor.

Catalyzes the condensation of isopentenyl diphosphate (IPP) with allylic pyrophosphates generating different type of terpenoids. This is Isoprenyl transferase from Geobacter sulfurreducens (strain ATCC 51573 / DSM 12127 / PCA).